Reading from the N-terminus, the 424-residue chain is Galacturonokinase (424 aa).

Serine 2 carries the N-acetylserine modification. ATP is bound at residue 146 to 155 (DSSGLSSSAA). Aspartate 197 (proton acceptor) is an active-site residue.

The protein belongs to the GHMP kinase family. Mg(2+) is required as a cofactor. Mn(2+) serves as cofactor. Requires Ca(2+) as cofactor. As to expression, expressed in roots, stems, leaves, flowers and young siliques. Higher expression in the elongating middle stem region than in the lower or upper stem region.

It carries out the reaction D-galacturonate + ATP = 1-phospho-alpha-D-galacturonate + ADP + H(+). Inhibited by EDTA and ADP. Sugar-1-kinase with a strict substrate specificity for the alpha-anomeric configuration of D-galacturonic acid (D-GalA) and ATP. Involved in the biosynthesis of UDP-galacturonic acid (UDP-GalA) from the salvaged GalA that is released during growth-dependent cell wall restructuring. This is Galacturonokinase (GALAK) from Arabidopsis thaliana (Mouse-ear cress).